Consider the following 449-residue polypeptide: Heterogeneous nuclear ribonucleoprotein H (449 aa).

The residue at position 1 (Met1) is an N-acetylmethionine. Met2 bears the N-acetylmethionine; in Heterogeneous nuclear ribonucleoprotein H, N-terminally processed mark. An RRM 1 domain is found at 11–90; it reads FVVKVRGLPW…RYVEVFKSNN (80 aa). At Ser23 the chain carries Phosphoserine. Lys35 participates in a covalent cross-link: Glycyl lysine isopeptide (Lys-Gly) (interchain with G-Cter in SUMO2). 2 positions are modified to phosphoserine: Ser54 and Ser63. Residues Lys87 and Lys98 each participate in a glycyl lysine isopeptide (Lys-Gly) (interchain with G-Cter in SUMO2) cross-link. The 78-residue stretch at 111 to 188 folds into the RRM 2 domain; it reads GFVRLRGLPF…RYIEIFKSSR (78 aa). Arg233 bears the Dimethylated arginine; alternate mark. The residue at position 233 (Arg233) is an Omega-N-methylarginine; alternate. Residues 234–249 form a 1-1 repeat; it reads GAYGGGYGGYDDYNGY. Positions 234–433 are 2 X 16 AA Gly-rich approximate repeats; it reads GAYGGGYGGY…YGGQSSMSGY (200 aa). Tyr246 is subject to Phosphotyrosine. In terms of domain architecture, RRM 3 spans 289–364; it reads HCVHMRGLPY…RYVELFLNST (76 aa). Residue Ser310 is modified to Phosphoserine. 3 repeat units span residues 354 to 372, 374 to 392, and 418 to 433. The 2 X 19 AA perfect repeats stretch occupies residues 354–392; the sequence is HRYVELFLNSTAGASGGAYEHRYVELFLNSTAGASGGAY.

Part of a ternary complex containing FUBP2, PTBP1, PTBP2 and HNRNPH1. Identified in the spliceosome C complex. Interacts with IGF2BP1. Interacts with CUGBP1; the interaction is RNA-dependent. Interacts with MBNL1; the interaction in RNA-independent.

The protein localises to the nucleus. It localises to the nucleoplasm. Functionally, this protein is a component of the heterogeneous nuclear ribonucleoprotein (hnRNP) complexes which provide the substrate for the processing events that pre-mRNAs undergo before becoming functional, translatable mRNAs in the cytoplasm. Mediates pre-mRNA alternative splicing regulation. Inhibits, together with CUGBP1, insulin receptor (IR) pre-mRNA exon 11 inclusion in myoblast. Binds to the IR RNA. Binds poly(RG). The sequence is that of Heterogeneous nuclear ribonucleoprotein H (Hnrnph1) from Rattus norvegicus (Rat).